Reading from the N-terminus, the 327-residue chain is Fumigatonoid B endoperoxide isomerase nvfE (327 aa).

Residues 1–22 (MGRDQVSHKRSQNSNVSEIPDL) form a disordered region. Fe cation is bound by residues histidine 152, aspartate 154, and histidine 234.

The protein belongs to the PhyH family. As to quaternary structure, homodimer. The cofactor is Fe cation.

It carries out the reaction fumigatonoid B = fumigatonoid C. The protein operates within secondary metabolite biosynthesis; terpenoid biosynthesis. Its function is as follows. Fumigatonoid B endoperoxide isomerase; part of the gene cluster that mediates the biosynthesis of novofumigatonin, a heavily oxygenated meroterpenoid containing a unique orthoester moiety. The first step of the pathway is the synthesis of 3,5-dimethylorsellinic acid (DMOA) by the polyketide synthase nvfA via condensation of one acetyl-CoA starter unit with 3 malonyl-CoA units and 2 methylations. DMOA is then converted to farnesyl-DMOA by the farnesyltransferase nvfB. Epoxydation by FAD-dependent monooxygenase nvfK, followed by a protonation-initiated cyclization catalyzed by the terpene cyclase nvfL leads to the production of asnavolin H. The short chain dehydrogenase nvfC then as a 3-OH dehydrogenase of asnovolin H to yield chemesin D. There are two branches to synthesize asnovolin A from chemesin D. In one branch, chemesin D undergoes Baeyer-Villiger oxidation by nvfH, methylation by nvfJ, and enoyl reduction by the nvfM D enoylreductase that reduces the double bond between C-5'and C-6', to form respectively asnovolin I, asnovolin K, and asnovolin A. In the other branch, the methylation precedes the Baeyer-Villiger oxidation and the enoyl reduction to yield asnovolin A via the asnovolin J intermediate. Asnovolin A is further converted to fumigatonoid A by the Fe(II)/2-oxoglutarate-dependent dioxygenase nvfI that catalyzes an endoperoxidation reaction. The alpha/beta hydrolase nvfD then acts as an epimerase that converts fumigatonoid A to its C-5' epimer, which then undergoes spontaneous or nvfD-catalyzed lactonization. The following step utilizes the ketoreductase nvfG to produce fumigatonoid B. The dioxygenase nvfE further converts fumigatonoid B into fumigatonoid C. Finally the Fe(II)/2-oxoglutarate-dependent dioxygenase nvfF catalyzes two rounds of oxidation to transform fumigatonoid C into the end product, novofumigatonin A. This chain is Fumigatonoid B endoperoxide isomerase nvfE, found in Aspergillus novofumigatus (strain IBT 16806).